The following is a 234-amino-acid chain: Thymidylate kinase (234 aa).

11-18 (GLEGSGKT) lines the ATP pocket.

The protein belongs to the thymidylate kinase family.

It catalyses the reaction dTMP + ATP = dTDP + ADP. Functionally, phosphorylation of dTMP to form dTDP in both de novo and salvage pathways of dTTP synthesis. This Wigglesworthia glossinidia brevipalpis protein is Thymidylate kinase.